We begin with the raw amino-acid sequence, 72 residues long: Protein SlyX homolog (72 aa).

The protein belongs to the SlyX family.

This Vibrio cholerae serotype O1 (strain ATCC 39541 / Classical Ogawa 395 / O395) protein is Protein SlyX homolog.